The sequence spans 242 residues: ATP-dependent dethiobiotin synthetase BioD (242 aa).

12-17 (EVGKTV) is a binding site for ATP. Thr-16 is a binding site for Mg(2+). Residue Lys-37 is part of the active site. Ser-41 contacts substrate. ATP is bound by residues Asp-51 and 112–115 (EGAG). Residues Asp-51 and Glu-112 each contribute to the Mg(2+) site.

This sequence belongs to the dethiobiotin synthetase family. Homodimer. Mg(2+) is required as a cofactor.

It is found in the cytoplasm. It catalyses the reaction (7R,8S)-7,8-diammoniononanoate + CO2 + ATP = (4R,5S)-dethiobiotin + ADP + phosphate + 3 H(+). It participates in cofactor biosynthesis; biotin biosynthesis; biotin from 7,8-diaminononanoate: step 1/2. Its function is as follows. Catalyzes a mechanistically unusual reaction, the ATP-dependent insertion of CO2 between the N7 and N8 nitrogen atoms of 7,8-diaminopelargonic acid (DAPA, also called 7,8-diammoniononanoate) to form a ureido ring. The chain is ATP-dependent dethiobiotin synthetase BioD from Bacillus cereus (strain AH820).